A 414-amino-acid polypeptide reads, in one-letter code: MKFNTVALTLATAGSLVTAQHHHQHRHHQHKREDVVESSATVVQYELDGKPISLKQVCAGLADNTLKFANNDHPTGICDNLSSAAAPASTPEVTSAFAPAQFIELSSVVTSATPTSASSSETVQTPAASSSSASSSSTATGLDADFPDGELDCSTFPSEYGAIPLDYLKLGGWSGIQYVSYAGNFINDIVTAVAGDTCKDGAMCSYACPPGYQKSQWPSTQGATGQSVGGIECRNGKLHLTNPSLSKKLCIPGVGGVHVQNTLGETVAVCRTDYPGTESETIPIGLGGNDLQPLTCPDGETYYKWQGKTTSAQYYVNPKGVTPEKGCQWGDGTQPIGNWAPVNLGVGLNKGKWLSIFQNSPTTSEKLDFNIKIKGDNLSGSCKYENGVFYSETGSSSSGCTVQVMSGDATFVFY.

Positions 1–19 (MKFNTVALTLATAGSLVTA) are cleaved as a signal peptide. Asn-80 is a glycosylation site (N-linked (GlcNAc...) asparagine). The span at 115–140 (TSASSSETVQTPAASSSSASSSSTAT) shows a compositional bias: low complexity. The tract at residues 115–141 (TSASSSETVQTPAASSSSASSSSTATG) is disordered. Asn-377 carries N-linked (GlcNAc...) asparagine glycosylation.

Belongs to the SUN family. In terms of processing, highly glycosylated.

Its subcellular location is the secreted. It localises to the cell wall. Functionally, cell surface beta-glucosidase involved in cell wall biosynthesis and septation, and thus required for normal growth and correct hyphal morphogenesis. Has hydrolytic activity on linear (1-&gt;3)-beta-D-glucans such as laminaribiose and other laminarioligosaccharides. Also has a minor transferase activity. The protein is Secreted beta-glucosidase sun1 (sun1) of Aspergillus fumigatus (strain ATCC MYA-4609 / CBS 101355 / FGSC A1100 / Af293) (Neosartorya fumigata).